The following is a 721-amino-acid chain: MTNPMVEQGASQLMGGSAMPPEQHGEMPEQNLKRLSEGFPRDAIQTGGVKSCSWRRVFVVGFALLISAFAIFEMRGVFLVGGLTPIEYAVLVLFAINFCWIALAFSSSIAGFFVLASRKPAPNTEQPLTTRTAILMPTYNEAPDRVFAAVETMALALAKTEHGHAFDWFILSDTTDPEVALSEEQAFWLLRQQTAGKANVYYRRRRKNIARKAGNIADFCRRWGSGYDHLLVLDADSVMQPSTMISLAQRMQSDPDAGLIQTIPALINGTTLMARVQQFAARIYGPVVGTGLAWWVQKEGNFWGHNAIIRTEAFMSAAGLPHLSGRPPFGGHILSHDFVEAALIRRAGWSVTIAADLSGSFEECPPSIIDLAVRDRRWCQGNLQHSRIIGTKGLHWISRLHLTTGIMSYLSSPFWLLLILSGLLLALQAHFIRPEYFTEQFSLFPTWPVMDSARALQLFYITMGILFSPKIFGLLLLMFDGEMCRTLGGRLRVILSAVTEILLSALVAPIMMLIHCGAVVSILFGRDSGWAPQRRDDGSLPIKDLLYRHRWHMTAGVLLGYAAMLDSWTLLAWMSPALIGLWFSVPLSGITASYTIGAWFKQKRILATPEEIETPAIVLAAQARRDEYVVDLQEVWNARMVLADHNLIALHIAMMDKLPSRQPGTAIEPLDAVARIKVQEAESQESLLALLTKVELSYVLGNPLLIQQVAKLPPSLANQTV.

6 consecutive transmembrane segments (helical) span residues 52–72 (CSWR…FAIF), 97–117 (NFCW…VLAS), 412–432 (SPFW…AHFI), 459–479 (FYIT…LLMF), 505–525 (ALVA…ILFG), and 570–590 (LLAW…LSGI).

Belongs to the glycosyltransferase 2 family. OpgH subfamily.

The protein resides in the cell inner membrane. It functions in the pathway glycan metabolism; osmoregulated periplasmic glucan (OPG) biosynthesis. Functionally, involved in the biosynthesis of osmoregulated periplasmic glucans (OPGs). The sequence is that of Glucans biosynthesis glucosyltransferase H from Vibrio cholerae serotype O1 (strain ATCC 39541 / Classical Ogawa 395 / O395).